We begin with the raw amino-acid sequence, 194 residues long: Ancillary SecYEG translocon subunit (194 aa).

At 1 to 10 (MHLNKMKKVS) the chain is on the cytoplasmic side. A helical transmembrane segment spans residues 11 to 31 (LKTYLVLFFLIFFIFCSFWFI). Topologically, residues 32 to 194 (KPKEKKLKLE…INMKINEIKR (163 aa)) are periplasmic.

The protein belongs to the YfgM family. Interacts with the SecYEG translocon. Forms a complex with PpiD.

It is found in the cell inner membrane. Functionally, may mediate protein transfer from the SecYEG translocon to the periplasmic chaperone network via its periplasmic C-terminal region. In Buchnera aphidicola subsp. Schizaphis graminum (strain Sg), this protein is Ancillary SecYEG translocon subunit.